Consider the following 662-residue polypeptide: Protein distal antenna (662 aa).

Residues 21–72 enclose the HTH psq-type domain; that stretch reads TKGKRPLRHLTATDKIDAIQRIHDGESKASVARDIGVPESTLRGWCKNEEKL. The segment at residues 48–68 is a DNA-binding region (H-T-H motif); the sequence is KASVARDIGVPESTLRGWCKN. Disordered stretches follow at residues 265–299, 348–407, 491–537, and 558–596; these read RNAR…STPS, YSQM…PEDT, PEDL…DDEV, and QSSP…KSTC. Residues 349–391 are compositionally biased toward low complexity; that stretch reads SQMPRPSSPQQPQSTPPTTTTTQQQQPQSSTPPTATPPIVSTP. The segment covering 511–520 has biased composition (polar residues); it reads FNPSPSTSIK. The span at 527–536 shows a compositional bias: acidic residues; it reads VDEDEDEDDE.

Homomers. Interacts with itself, danr, ey and dac to form a complex (or complexes) containing the RD factors.

The protein localises to the nucleus. Its function is as follows. Probable transcription factor with a role in the retinal determination (RD) network. Contributes to differentiation of antenna-specific characteristics. This is Protein distal antenna from Culex quinquefasciatus (Southern house mosquito).